Here is a 379-residue protein sequence, read N- to C-terminus: MPTAFPPDSVGLVVPQMAHFSEPLALACGRSLPAYDLIYETYGQLNATASNAVLICHALSGHHHAAGFHSVDERKPGWWDSCIGPGKPIDTNKFFVVSLNNLGGCNGSTGPSSLNPENGKPFGADFPVLTVEDWVHSQARLADLLGIDQWAAVIGGSLGGMQALQWTITYPDRVRHCLAIASAPKLSAQNIAFNEVARQAILTDPEFHGGSFQEAGVIPKRGLMLARMVGHITYLSDDSMGEKFGRGLKSEKLNYDFHSVEFQVESYLRYQGEEFSGRFDANTYLLMTKALDYFDPAANFDDDLAKTFEGATAKFCVMSFTTDWRFSPARSRELVDALMAARKDVCYLEIDAPQGHDAFLIPIPRYLQAFSNYMNRITL.

An AB hydrolase-1 domain is found at 51-360; sequence NAVLICHALS…DAPQGHDAFL (310 aa). The active-site Nucleophile is the serine 157. Arginine 227 provides a ligand contact to substrate. Residues aspartate 323 and histidine 356 contribute to the active site. Residue aspartate 357 participates in substrate binding.

The protein belongs to the AB hydrolase superfamily. MetX family. As to quaternary structure, homodimer.

The protein resides in the cytoplasm. It catalyses the reaction L-homoserine + succinyl-CoA = O-succinyl-L-homoserine + CoA. The protein operates within amino-acid biosynthesis; L-methionine biosynthesis via de novo pathway; O-succinyl-L-homoserine from L-homoserine: step 1/1. Functionally, transfers a succinyl group from succinyl-CoA to L-homoserine, forming succinyl-L-homoserine. This chain is Homoserine O-succinyltransferase, found in Pseudomonas fluorescens (strain SBW25).